Consider the following 223-residue polypeptide: Endonuclease V (223 aa).

Residues Asp45 and Asp113 each contribute to the Mg(2+) site.

This sequence belongs to the endonuclease V family. It depends on Mg(2+) as a cofactor.

The protein resides in the cytoplasm. The enzyme catalyses Endonucleolytic cleavage at apurinic or apyrimidinic sites to products with a 5'-phosphate.. Its function is as follows. DNA repair enzyme involved in the repair of deaminated bases. Selectively cleaves double-stranded DNA at the second phosphodiester bond 3' to a deoxyinosine leaving behind the intact lesion on the nicked DNA. The protein is Endonuclease V of Dehalococcoides mccartyi (strain ATCC BAA-2100 / JCM 16839 / KCTC 5957 / BAV1).